The primary structure comprises 180 residues: NAD(P)H-quinone oxidoreductase subunit 6, chloroplastic (180 aa).

A run of 5 helical transmembrane segments spans residues 10–30, 32–52, 57–77, 102–122, and 153–173; these read LLLAPLTLSLIFGGIGVVLLT, IIYSALSLGLVLICISFFYII, FVAVAQILIYIGAVNILILFA, IVCTSLFCSLITIILNISWFG, and FLPFELISIILLVALIGAITI.

The protein belongs to the complex I subunit 6 family. NDH is composed of at least 16 different subunits, 5 of which are encoded in the nucleus.

It localises to the plastid. The protein localises to the chloroplast thylakoid membrane. It catalyses the reaction a plastoquinone + NADH + (n+1) H(+)(in) = a plastoquinol + NAD(+) + n H(+)(out). The enzyme catalyses a plastoquinone + NADPH + (n+1) H(+)(in) = a plastoquinol + NADP(+) + n H(+)(out). Its function is as follows. NDH shuttles electrons from NAD(P)H:plastoquinone, via FMN and iron-sulfur (Fe-S) centers, to quinones in the photosynthetic chain and possibly in a chloroplast respiratory chain. The immediate electron acceptor for the enzyme in this species is believed to be plastoquinone. Couples the redox reaction to proton translocation, and thus conserves the redox energy in a proton gradient. This chain is NAD(P)H-quinone oxidoreductase subunit 6, chloroplastic (ndhG), found in Cryptomeria japonica (Japanese cedar).